The sequence spans 747 residues: Phosphoribosylformylglycinamidine synthase subunit PurL (747 aa).

H46 is an active-site residue. Residues Y49 and K88 each contribute to the ATP site. E90 contributes to the Mg(2+) binding site. Substrate-binding positions include 91–94 and R113; that span reads SHNH. The active-site Proton acceptor is H92. D114 serves as a coordination point for Mg(2+). Residue Q237 participates in substrate binding. D265 is a binding site for Mg(2+). 309-311 serves as a coordination point for substrate; the sequence is ESQ. 2 residues coordinate ATP: D493 and G530. Residue N531 participates in Mg(2+) binding. Position 533 (S533) interacts with substrate.

The protein belongs to the FGAMS family. In terms of assembly, monomer. Part of the FGAM synthase complex composed of 1 PurL, 1 PurQ and 2 PurS subunits.

The protein localises to the cytoplasm. The catalysed reaction is N(2)-formyl-N(1)-(5-phospho-beta-D-ribosyl)glycinamide + L-glutamine + ATP + H2O = 2-formamido-N(1)-(5-O-phospho-beta-D-ribosyl)acetamidine + L-glutamate + ADP + phosphate + H(+). It participates in purine metabolism; IMP biosynthesis via de novo pathway; 5-amino-1-(5-phospho-D-ribosyl)imidazole from N(2)-formyl-N(1)-(5-phospho-D-ribosyl)glycinamide: step 1/2. Its function is as follows. Part of the phosphoribosylformylglycinamidine synthase complex involved in the purines biosynthetic pathway. Catalyzes the ATP-dependent conversion of formylglycinamide ribonucleotide (FGAR) and glutamine to yield formylglycinamidine ribonucleotide (FGAM) and glutamate. The FGAM synthase complex is composed of three subunits. PurQ produces an ammonia molecule by converting glutamine to glutamate. PurL transfers the ammonia molecule to FGAR to form FGAM in an ATP-dependent manner. PurS interacts with PurQ and PurL and is thought to assist in the transfer of the ammonia molecule from PurQ to PurL. The chain is Phosphoribosylformylglycinamidine synthase subunit PurL from Deinococcus radiodurans (strain ATCC 13939 / DSM 20539 / JCM 16871 / CCUG 27074 / LMG 4051 / NBRC 15346 / NCIMB 9279 / VKM B-1422 / R1).